A 555-amino-acid polypeptide reads, in one-letter code: Oxygen-dependent choline dehydrogenase (555 aa).

4–33 (DYIIIGAGSAGNVLATRLTEDPDVTVLLLE) contributes to the FAD binding site. H473 functions as the Proton acceptor in the catalytic mechanism.

This sequence belongs to the GMC oxidoreductase family. FAD serves as cofactor.

The enzyme catalyses choline + A = betaine aldehyde + AH2. It carries out the reaction betaine aldehyde + NAD(+) + H2O = glycine betaine + NADH + 2 H(+). It functions in the pathway amine and polyamine biosynthesis; betaine biosynthesis via choline pathway; betaine aldehyde from choline (cytochrome c reductase route): step 1/1. Involved in the biosynthesis of the osmoprotectant glycine betaine. Catalyzes the oxidation of choline to betaine aldehyde and betaine aldehyde to glycine betaine at the same rate. The sequence is that of Oxygen-dependent choline dehydrogenase from Proteus mirabilis (strain HI4320).